Here is an 861-residue protein sequence, read N- to C-terminus: Replication factor C subunit 1 (861 aa).

The disordered stretch occupies residues 1 to 103 (MVNISDFFGK…SSKSSDSASN (103 aa)). The span at 16–28 (RSSTSRPTRQVGS) shows a compositional bias: polar residues. Thr-38 carries the post-translational modification Phosphothreonine. Residue Ser-40 is modified to Phosphoserine. The residue at position 63 (Thr-63) is a Phosphothreonine. The BRCT domain maps to 153–243 (GKPNCLLGLT…PAEGGDGEAA (91 aa)). ATP-binding positions include Thr-299, Cys-311, 353–361 (GPPGIGKTT), and Asn-456. The interval 788-861 (STIGGGGVGT…GGSKKRKTKA (74 aa)) is disordered. Over residues 803-823 (DFEDVVDADDNPVPADDEETQ) the composition is skewed to acidic residues. 2 consecutive short sequence motifs (nuclear localization signal) follow at residues 830–834 (KKDKL) and 855–860 (KKRKTK). The span at 836-861 (KQKAKPTKRKTATSKPGGSKKRKTKA) shows a compositional bias: basic residues.

Belongs to the activator 1 large subunit family. In terms of assembly, replication factor C (RFC) is a heteropentamer of subunits RFC1, RFC2, RFC3, RFC4 and RFC5 and forms a complex with POL30/PCNA in the presence of ATP. Interacts with ECO1 and POL30/PCNA.

The protein localises to the nucleus. Functionally, component of the ATP-dependent clamp loader RFC complex for the POL30/PCNA homotrimer DNA clamp. During a clamp loading circle, the RFC:clamp complex binds to DNA and the recognition of the double-stranded/single-stranded junction stimulates ATP hydrolysis by RFC. The complex presumably provides bipartite ATP sites in which one subunit supplies a catalytic site for hydrolysis of ATP bound to the neighboring subunit. Dissociation of RFC from the clamp leaves the clamp encircling DNA. Replication factor C (RFC or activator 1) complex acts during elongation of primed DNA templates by DNA polymerase delta and epsilon. RFC has an essential but redundant activity in sister chromatid cohesion establishment. In Saccharomyces cerevisiae (strain ATCC 204508 / S288c) (Baker's yeast), this protein is Replication factor C subunit 1 (RFC1).